Reading from the N-terminus, the 1482-residue chain is Chromosome partition protein MukB (1482 aa).

34–41 is an ATP binding site; sequence GGNGAGKS. The stretch at 333-665 forms a coiled coil; the sequence is ASDHLNLVQT…LEKQIERLSQ (333 aa). The interval 666 to 783 is flexible hinge; that stretch reads PSGAEDSRMI…ELPLFGRAAR (118 aa). Coiled-coil stretches lie at residues 784 to 1116 and 1209 to 1260; these read ENRL…AKAG and VDAI…MLNQ.

Belongs to the SMC family. MukB subfamily. In terms of assembly, homodimerization via its hinge domain. Binds to DNA via its C-terminal region. Interacts, and probably forms a ternary complex, with MukE and MukF via its C-terminal region. The complex formation is stimulated by calcium or magnesium. Interacts with tubulin-related protein FtsZ.

Its subcellular location is the cytoplasm. It is found in the nucleoid. Plays a central role in chromosome condensation, segregation and cell cycle progression. Functions as a homodimer, which is essential for chromosome partition. Involved in negative DNA supercoiling in vivo, and by this means organize and compact chromosomes. May achieve or facilitate chromosome segregation by condensation DNA from both sides of a centrally located replisome during cell division. The polypeptide is Chromosome partition protein MukB (Photorhabdus laumondii subsp. laumondii (strain DSM 15139 / CIP 105565 / TT01) (Photorhabdus luminescens subsp. laumondii)).